Here is a 209-residue protein sequence, read N- to C-terminus: MSYAYLFKYIIIGDTGVGKSCLLLQFTDKRFQPVHDLTIGVEFGARMITIDNKPIKLQIWDTAGQESFRSITRSYYRGAAGALLVYDITRRETFNHLASWLEDARQHANANMTIMLVGNKCDLSHRRAVSYEEGEQFAKEHGLIFMEASAKTAQNVEEAFVKTAGAIYKKIQDGVFDVSNESYGIKVGYVVPGQSGGAGSSSQGGGCCS.

Residue 13–21 (GDTGVGKSC) participates in GTP binding. The Effector region signature appears at 35 to 43 (HDLTIGVEF). GTP-binding positions include 61-65 (DTAGQ), 119-122 (NKCD), and 149-151 (SAK). 2 S-geranylgeranyl cysteine lipidation sites follow: Cys207 and Cys208.

This sequence belongs to the small GTPase superfamily. Rab family.

Its subcellular location is the endoplasmic reticulum membrane. The protein localises to the golgi apparatus membrane. Its function is as follows. Protein transport. Probably involved in vesicular traffic. The polypeptide is Ras-related protein Rab-2-A (RAB2A) (Zea mays (Maize)).